Reading from the N-terminus, the 152-residue chain is Glutaredoxin-related protein 5, mitochondrial (152 aa).

A mitochondrion-targeting transit peptide spans Met-1 to Ala-31. The Glutaredoxin domain occupies Ala-38–Ser-141. Lys-55 is a binding site for glutathione. N6-succinyllysine is present on Lys-55. Cys-63 provides a ligand contact to [2Fe-2S] cluster. Residues Arg-93–Lys-97, Ile-105, and Cys-118–Asp-119 each bind glutathione. At Ser-151 the chain carries Phosphoserine.

The protein belongs to the glutaredoxin family. Monothiol subfamily. In terms of assembly, homodimer. Interacts with ISCU. Interacts with BOLA1. Detected in bone, liver, muscle and kidney.

The protein resides in the mitochondrion matrix. Monothiol glutaredoxin involved in mitochondrial iron-sulfur (Fe/S) cluster transfer. Receives 2Fe/2S clusters from scaffold protein ISCU and mediates their transfer to apoproteins, to the 4Fe/FS cluster biosynthesis machinery, or export from mitochondrion. Required for normal regulation of hemoglobin synthesis by the iron-sulfur protein ACO1. This chain is Glutaredoxin-related protein 5, mitochondrial (Glrx5), found in Mus musculus (Mouse).